A 422-amino-acid chain; its full sequence is Enolase (422 aa).

(2R)-2-phosphoglycerate is bound at residue Gln-161. Glu-203 acts as the Proton donor in catalysis. The Mg(2+) site is built by Asp-240, Glu-283, and Asp-310. Residues Lys-335, Arg-364, Ser-365, and Lys-386 each contribute to the (2R)-2-phosphoglycerate site. Lys-335 functions as the Proton acceptor in the catalytic mechanism.

This sequence belongs to the enolase family. The cofactor is Mg(2+).

The protein localises to the cytoplasm. Its subcellular location is the secreted. It localises to the cell surface. The enzyme catalyses (2R)-2-phosphoglycerate = phosphoenolpyruvate + H2O. Its pathway is carbohydrate degradation; glycolysis; pyruvate from D-glyceraldehyde 3-phosphate: step 4/5. Catalyzes the reversible conversion of 2-phosphoglycerate (2-PG) into phosphoenolpyruvate (PEP). It is essential for the degradation of carbohydrates via glycolysis. The protein is Enolase of Deinococcus deserti (strain DSM 17065 / CIP 109153 / LMG 22923 / VCD115).